Consider the following 573-residue polypeptide: Developmental and secondary metabolism regulator VEL1 (573 aa).

A Velvet domain is found at 26 to 220; that stretch reads NRHLWYQLTV…ADQGCRVRIR (195 aa). Positions 40–45 match the Nuclear localization signal motif; the sequence is ERARAC. A disordered region spans residues 222 to 520; it reads DVRMRKRDGK…STGGKRKHDH (299 aa). Positions 230–245 are enriched in basic and acidic residues; sequence GKGSGFDRRGEEEYSR. Pro residues-rich tracts occupy residues 291–310 and 341–351; these read APPPLPPPPPSSYDAPPPAA and APIPPATPTGP. Residues 352–363 are compositionally biased toward low complexity; sequence YPTSSAAPSPYA. Over residues 379–389 the composition is skewed to pro residues; it reads PPAPSASPAPP. Residues 432-448 are compositionally biased toward polar residues; the sequence is TPASQPTYSTPASQPTY. Pro residues predominate over residues 458-475; that stretch reads SAPPPAPYSAPAPPPPRP. The tract at residues 476–504 is PEST; the sequence is SMSQSSLAPLKIASLVSPLPPIEAQTEPL.

It belongs to the velvet family. VeA subfamily. In terms of assembly, component of the heterotrimeric velvet complex composed of LAE1, VEL1 and VEL2; VEL1 acting as a bridging protein between LAE1 and VEL2. Interacts with LAE1.

It localises to the nucleus. It is found in the cytoplasm. Functionally, component of the velvet transcription factor complex that controls sexual/asexual developmental ratio in response to light, promoting sexual development in the darkness while stimulating asexual sporulation under illumination. The velvet complex hat acts as a global regulator for secondary metabolite gene expression. Regulates expression of the carbohydrate-active enzyme gene clusters. This is Developmental and secondary metabolism regulator VEL1 from Hypocrea jecorina (strain QM6a) (Trichoderma reesei).